The sequence spans 166 residues: Putative signal peptidase complex catalytic subunit SEC11B (166 aa).

At 1 to 6 (MNKWRL) the chain is on the cytoplasmic side. A helical; Signal-anchor for type II membrane protein transmembrane segment spans residues 7-24 (YYQVLNFGMIVSSALMIW). The Extracellular portion of the chain corresponds to 25–166 (KGLMVITGSE…LGLFVLVHRE (142 aa)). Ser-43 is an active-site residue.

Belongs to the peptidase S26B family.

The protein localises to the membrane. It carries out the reaction Cleavage of hydrophobic, N-terminal signal or leader sequences from secreted and periplasmic proteins.. Putative component of some signal peptidase complex which removes signal peptides from nascent proteins as they are translocated into the lumen of the endoplasmic reticulum. The polypeptide is Putative signal peptidase complex catalytic subunit SEC11B (SEC11B) (Homo sapiens (Human)).